The sequence spans 184 residues: Protein Iojap-related, mitochondrial (184 aa).

Residues 1–39 constitute a mitochondrion transit peptide; that stretch reads MLTTLRSRCSSLLLNQSWKLAPNRIFASSPSFSSSAGIS.

Belongs to the Iojap/RsfS family.

The protein localises to the mitochondrion. Its function is as follows. May be a ribosome silencing factor involved in organelle biogenesis and required for germination. The protein is Protein Iojap-related, mitochondrial of Arabidopsis thaliana (Mouse-ear cress).